The chain runs to 294 residues: Glycine--tRNA ligase alpha subunit (294 aa).

The protein belongs to the class-II aminoacyl-tRNA synthetase family. As to quaternary structure, tetramer of two alpha and two beta subunits.

Its subcellular location is the cytoplasm. The enzyme catalyses tRNA(Gly) + glycine + ATP = glycyl-tRNA(Gly) + AMP + diphosphate. This chain is Glycine--tRNA ligase alpha subunit, found in Lawsonia intracellularis (strain PHE/MN1-00).